An 813-amino-acid polypeptide reads, in one-letter code: Calpain-7 (813 aa).

N-acetylmethionine is present on Met1. At Thr95 the chain carries Phosphothreonine. Residues 232-540 enclose the Calpain catalytic domain; it reads RERFAYPMPF…YDVVYLSWNP (309 aa). Active-site residues include Cys290, His458, and Asn478. The segment at 541–701 is domain III; it reads ALFKESTCIH…INGKWSGQSA (161 aa). The tract at residues 702 to 813 is domain N; the sequence is GGCGNFQETH…TVPIKTTQLQ (112 aa).

This sequence belongs to the peptidase C2 family. Ubiquitous.

It localises to the nucleus. Its function is as follows. Calcium-regulated non-lysosomal thiol-protease. The protein is Calpain-7 (Capn7) of Mus musculus (Mouse).